An 820-amino-acid chain; its full sequence is Disintegrin and metalloproteinase domain-containing protein 29 (820 aa).

An N-terminal signal peptide occupies residues 1-18 (MKMLLLLHCLGVFLSCSG). Residues 19-193 (HIQDEHPQYH…TQKQSSYVGW (175 aa)) constitute a propeptide that is removed on maturation. The Extracellular segment spans residues 194–674 (WIHFRIVEIV…GPPPKRKKKK (481 aa)). In terms of domain architecture, Peptidase M12B spans 198–390 (RIVEIVVVID…RTKCLLETVH (193 aa)). N-linked (GlcNAc...) asparagine glycosylation is found at Asn-217 and Asn-320. Intrachain disulfides connect Cys-307–Cys-384, Cys-347–Cys-369, and Cys-349–Cys-354. N-linked (GlcNAc...) asparagine glycosylation is found at Asn-368, Asn-428, Asn-469, Asn-538, Asn-545, Asn-558, and Asn-564. In terms of domain architecture, Disintegrin spans 397–483 (VKRCGNGVVE…KCPDDFYVED (87 aa)). A disulfide bridge links Cys-455 with Cys-475. 3 disulfide bridges follow: Cys-625-Cys-636, Cys-630-Cys-642, and Cys-644-Cys-653. One can recognise an EGF-like domain in the interval 625 to 654 (CSPAFCNKRGICNNKHHCHCNYLWDPPNCL). Residues 675–695 (KFCYLCILLLIVLFILLCCLY) form a helical membrane-spanning segment. The Cytoplasmic portion of the chain corresponds to 696-820 (RLCKKSKPIK…SQSQPPVTPS (125 aa)). The disordered stretch occupies residues 706–820 (KQQDVQTPSA…SQSQPPVTPS (115 aa)). A compositionally biased stretch (basic and acidic residues) spans 715 to 727 (AKEEEKIQRRPHE). Positions 738–820 (PSQSQPPVTP…SQSQPPVTPS (83 aa)) are enriched in low complexity. A run of 9 repeats spans residues 739–747 (SQSQPPVTP), 748–756 (SQSHPQVMP), 757–765 (SQSQPPVTP), 766–774 (SQSQPRVMP), 775–783 (SQSQPPVMP), 784–792 (SQSHPQLTP), 793–801 (SQSQPPVTP), 802–810 (SQRQPQLMP), and 811–819 (SQSQPPVTP). The segment at 739–819 (SQSQPPVTPS…PSQSQPPVTP (81 aa)) is 9 X 9 AA approximate repeats.

In terms of tissue distribution, expressed specifically in testes.

Its subcellular location is the membrane. Functionally, may be involved in spermatogenesis and fertilization. Seems to be a non catalytic metalloprotease-like protein. This chain is Disintegrin and metalloproteinase domain-containing protein 29 (ADAM29), found in Homo sapiens (Human).